We begin with the raw amino-acid sequence, 556 residues long: Transcription factor IIIB 70 kDa subunit (556 aa).

Residues 8-41 form a TFIIB-type zinc finger; sequence SSRKCKNCGSTDFVRDISNTTNELICKVCGLVTE. The Zn(2+) site is built by Cys12, Cys15, Cys33, and Cys36. Tandem repeats lie at residues 98–174 and 193–272. Residues 98–272 form an interaction with TBP and with the Pol III subunit C34 region; it reads LKAVSYALNI…EETLQQRLNE (175 aa). Positions 284–556 are interaction with TBP; that stretch reads KEFRDDETEV…DAINGLFGQK (273 aa). Disordered stretches follow at residues 287-309 and 477-501; these read RDDE…SFDK and ADLA…QSSA. Over residues 295–309 the composition is skewed to basic and acidic residues; that stretch reads EGERSAESKPPSFDK. The span at 486–495 shows a compositional bias: basic residues; it reads LRKKRSKRTN.

This sequence belongs to the TFIIB family. TFIIIB comprises the TATA-binding protein (TBP), the B-related factor (BRF) and a 70 kDa polypeptide.

The protein resides in the nucleus. In terms of biological role, general activator of RNA polymerase III transcription. Interacts with TBP. Binds to Pol III subunit C34 and to the TAU135 component of TFIIIC. This Kluyveromyces lactis (strain ATCC 8585 / CBS 2359 / DSM 70799 / NBRC 1267 / NRRL Y-1140 / WM37) (Yeast) protein is Transcription factor IIIB 70 kDa subunit (TDS4).